Consider the following 372-residue polypeptide: Probable arabinan endo-1,5-alpha-L-arabinosidase B (372 aa).

Positions 1–16 are cleaved as a signal peptide; sequence MTVLVALFCLVTWTLC. Residues 23–34 show a composition bias toward low complexity; sequence STQGTQQPQQPE. The tract at residues 23–52 is disordered; that stretch reads STQGTQQPQQPEKTPHPHPQPEDAFPPTHA. Residue Asp59 is the Proton acceptor of the active site. Asn120 carries N-linked (GlcNAc...) asparagine glycosylation. Residue Glu252 is the Proton donor of the active site. N-linked (GlcNAc...) asparagine glycosylation is present at Asn363.

The protein belongs to the glycosyl hydrolase 43 family.

Its subcellular location is the secreted. The catalysed reaction is Endohydrolysis of (1-&gt;5)-alpha-arabinofuranosidic linkages in (1-&gt;5)-arabinans.. It functions in the pathway glycan metabolism; L-arabinan degradation. Functionally, endo-1,5-alpha-L-arabinanase involved in degradation of pectin. Its preferred substrate is linear 1,5-alpha-L-arabinan. The chain is Probable arabinan endo-1,5-alpha-L-arabinosidase B (abnB) from Aspergillus fumigatus (strain ATCC MYA-4609 / CBS 101355 / FGSC A1100 / Af293) (Neosartorya fumigata).